The chain runs to 243 residues: tRNA (guanine-N(1)-)-methyltransferase (243 aa).

S-adenosyl-L-methionine is bound by residues Gly-108 and 127–132; that span reads LGDFVL.

Belongs to the RNA methyltransferase TrmD family. Homodimer.

The protein resides in the cytoplasm. The catalysed reaction is guanosine(37) in tRNA + S-adenosyl-L-methionine = N(1)-methylguanosine(37) in tRNA + S-adenosyl-L-homocysteine + H(+). Functionally, specifically methylates guanosine-37 in various tRNAs. In Streptococcus equi subsp. zooepidemicus (strain H70), this protein is tRNA (guanine-N(1)-)-methyltransferase.